The primary structure comprises 253 residues: Probable glutathione transferase omega-2 (253 aa).

Positions 25–105 constitute a GST N-terminal domain; the sequence is GIYRIYNMRF…YLDDLFPESR (81 aa). Cys35 (nucleophile) is an active-site residue. Residues Lys62, Val75, and 89-90 each bind glutathione; that span reads ES. The 129-residue stretch at 110 to 238 folds into the GST C-terminal domain; that stretch reads DPYEKVQQKL…SQPTEMGVGF (129 aa).

This sequence belongs to the GST superfamily. Omega family.

It carries out the reaction RX + glutathione = an S-substituted glutathione + a halide anion + H(+). It catalyses the reaction L-dehydroascorbate + 2 glutathione = glutathione disulfide + L-ascorbate. The enzyme catalyses methylarsonate + 2 glutathione + H(+) = methylarsonous acid + glutathione disulfide + H2O. Its function is as follows. Exhibits glutathione-dependent thiol transferase activity. Has dehydroascorbate reductase activity and may contribute to the recycling of ascorbic acid. Participates in the biotransformation of inorganic arsenic and reduces monomethylarsonic acid (MMA). This is Probable glutathione transferase omega-2 from Caenorhabditis briggsae.